Here is a 483-residue protein sequence, read N- to C-terminus: Regulatory protein ViaA (483 aa).

It belongs to the ViaA family. In terms of assembly, homodimer. Interacts with RavA.

It is found in the cytoplasm. Component of the RavA-ViaA chaperone complex, which may act on the membrane to optimize the function of some of the respiratory chains. ViaA stimulates the ATPase activity of RavA. The chain is Regulatory protein ViaA from Salmonella choleraesuis (strain SC-B67).